The primary structure comprises 336 residues: Protein SphX (336 aa).

The first 27 residues, 1 to 27 (MFDLSRLSRGIVPMALLLLGISACTPS), serve as a signal peptide directing secretion.

Belongs to the PstS family.

Its function is as follows. May be involved in the system for phosphate transport across the cytoplasmic membrane. The sequence is that of Protein SphX (sphX) from Synechocystis sp. (strain ATCC 27184 / PCC 6803 / Kazusa).